A 461-amino-acid polypeptide reads, in one-letter code: MNSFSNEEFDCHFLDEGFTAKDILDQKINEVSYSDDKDAFYVADLGDILKKHLRWLKALPRVTPFYAVKCNDSRTIVKTLAAIGTGFDCASKTEIQLVQSLGVPPERIIYANPCKQVSQIKYAANNGVQMMTFDSEVELMKVARAHPKAKLVLRIATDDSKAVCRLSVKFGATLKTSRLLLERAKELDIDVIGVSFHVGSGCTDPETFVQAISDARCVFDMGAEVGFNMYLLDIGGGFPGSEDVKLKFEEITSVINPALDKYFPSDSGVRIIAEPGRYYVASAFTLAVNIIAKKLVLKEQTGSDDEEESTDRTFMYYVNDGVYGSFNCILYDHAHVKPLLQKRPKPDEKYYSSSIWGPTCDGLDRIVERCNLPEMHVGDWMLFENMGAYTVAAASTFNGFQRPTIYYVMSGPTWQLMQQIRTQDFPPGVEEPDVGPLPVSCAWESGMKRHSAACASTRINV.

At K69 the chain carries N6-(pyridoxal phosphate)lysine. Residues S200, G237, and 274–277 (EPGR) contribute to the pyridoxal 5'-phosphate site. At S303 the chain carries Phosphoserine; by CK2. 331-332 (YD) contacts substrate. C360 acts as the Proton donor; shared with dimeric partner in catalysis. The residue at position 360 (C360) is an S-nitrosocysteine. D361 provides a ligand contact to substrate. A pyridoxal 5'-phosphate-binding site is contributed by Y389.

The protein belongs to the Orn/Lys/Arg decarboxylase class-II family. As to quaternary structure, homodimer. Only the dimer is catalytically active, as the active sites are constructed of residues from both monomers. Requires pyridoxal 5'-phosphate as cofactor.

The catalysed reaction is L-ornithine + H(+) = putrescine + CO2. It functions in the pathway amine and polyamine biosynthesis; putrescine biosynthesis via L-ornithine pathway; putrescine from L-ornithine: step 1/1. With respect to regulation, inhibited by antizymes (AZs) OAZ1, OAZ2 and OAZ3 in response to polyamine levels. AZs inhibit the assembly of the functional homodimer by binding to ODC monomers. Additionally, OAZ1 targets ODC monomers for ubiquitin-independent proteolytic destruction by the 26S proteasome. Functionally, catalyzes the first and rate-limiting step of polyamine biosynthesis that converts ornithine into putrescine, which is the precursor for the polyamines, spermidine and spermine. Polyamines are essential for cell proliferation and are implicated in cellular processes, ranging from DNA replication to apoptosis. The protein is Ornithine decarboxylase (ODC1) of Bos taurus (Bovine).